Reading from the N-terminus, the 322-residue chain is Ferrochelatase (322 aa).

2 residues coordinate Fe cation: His-195 and Glu-276.

This sequence belongs to the ferrochelatase family.

The protein resides in the cytoplasm. It catalyses the reaction heme b + 2 H(+) = protoporphyrin IX + Fe(2+). It functions in the pathway porphyrin-containing compound metabolism; protoheme biosynthesis; protoheme from protoporphyrin-IX: step 1/1. Catalyzes the ferrous insertion into protoporphyrin IX. The chain is Ferrochelatase from Edwardsiella ictaluri (strain 93-146).